Consider the following 156-residue polypeptide: ATP synthase subunit b (156 aa).

A helical transmembrane segment spans residues 7–27; that stretch reads FFAQMVVFFILWWVVAKFIWP.

This sequence belongs to the ATPase B chain family. F-type ATPases have 2 components, F(1) - the catalytic core - and F(0) - the membrane proton channel. F(1) has five subunits: alpha(3), beta(3), gamma(1), delta(1), epsilon(1). F(0) has three main subunits: a(1), b(2) and c(10-14). The alpha and beta chains form an alternating ring which encloses part of the gamma chain. F(1) is attached to F(0) by a central stalk formed by the gamma and epsilon chains, while a peripheral stalk is formed by the delta and b chains.

It localises to the cell inner membrane. F(1)F(0) ATP synthase produces ATP from ADP in the presence of a proton or sodium gradient. F-type ATPases consist of two structural domains, F(1) containing the extramembraneous catalytic core and F(0) containing the membrane proton channel, linked together by a central stalk and a peripheral stalk. During catalysis, ATP synthesis in the catalytic domain of F(1) is coupled via a rotary mechanism of the central stalk subunits to proton translocation. Functionally, component of the F(0) channel, it forms part of the peripheral stalk, linking F(1) to F(0). This Cupriavidus necator (strain ATCC 17699 / DSM 428 / KCTC 22496 / NCIMB 10442 / H16 / Stanier 337) (Ralstonia eutropha) protein is ATP synthase subunit b.